The chain runs to 474 residues: tRNA-2-methylthio-N(6)-dimethylallyladenosine synthase (474 aa).

Positions 3 to 120 (KKLHIKTWGC…LPEMINHVQG (118 aa)) constitute an MTTase N-terminal domain. Positions 12, 49, 83, 157, 161, and 164 each coordinate [4Fe-4S] cluster. One can recognise a Radical SAM core domain in the interval 143–375 (RAEGPTAFVS…QQRISQQAME (233 aa)). Positions 378–441 (RKMVGTVQRV…ASSLRGILLR (64 aa)) constitute a TRAM domain.

Belongs to the methylthiotransferase family. MiaB subfamily. In terms of assembly, monomer. It depends on [4Fe-4S] cluster as a cofactor.

The protein localises to the cytoplasm. It carries out the reaction N(6)-dimethylallyladenosine(37) in tRNA + (sulfur carrier)-SH + AH2 + 2 S-adenosyl-L-methionine = 2-methylsulfanyl-N(6)-dimethylallyladenosine(37) in tRNA + (sulfur carrier)-H + 5'-deoxyadenosine + L-methionine + A + S-adenosyl-L-homocysteine + 2 H(+). Functionally, catalyzes the methylthiolation of N6-(dimethylallyl)adenosine (i(6)A), leading to the formation of 2-methylthio-N6-(dimethylallyl)adenosine (ms(2)i(6)A) at position 37 in tRNAs that read codons beginning with uridine. In Yersinia pestis bv. Antiqua (strain Antiqua), this protein is tRNA-2-methylthio-N(6)-dimethylallyladenosine synthase.